A 172-amino-acid chain; its full sequence is Adenine phosphoribosyltransferase (172 aa).

The protein belongs to the purine/pyrimidine phosphoribosyltransferase family. In terms of assembly, homodimer.

The protein resides in the cytoplasm. The enzyme catalyses AMP + diphosphate = 5-phospho-alpha-D-ribose 1-diphosphate + adenine. The protein operates within purine metabolism; AMP biosynthesis via salvage pathway; AMP from adenine: step 1/1. Functionally, catalyzes a salvage reaction resulting in the formation of AMP, that is energically less costly than de novo synthesis. This chain is Adenine phosphoribosyltransferase, found in Pelobacter propionicus (strain DSM 2379 / NBRC 103807 / OttBd1).